A 582-amino-acid polypeptide reads, in one-letter code: 2-succinyl-5-enolpyruvyl-6-hydroxy-3-cyclohexene-1-carboxylate synthase (582 aa).

It belongs to the TPP enzyme family. MenD subfamily. In terms of assembly, homodimer. Mg(2+) is required as a cofactor. Requires Mn(2+) as cofactor. Thiamine diphosphate serves as cofactor.

It carries out the reaction isochorismate + 2-oxoglutarate + H(+) = 5-enolpyruvoyl-6-hydroxy-2-succinyl-cyclohex-3-ene-1-carboxylate + CO2. It participates in quinol/quinone metabolism; 1,4-dihydroxy-2-naphthoate biosynthesis; 1,4-dihydroxy-2-naphthoate from chorismate: step 2/7. Its pathway is quinol/quinone metabolism; menaquinone biosynthesis. Its function is as follows. Catalyzes the thiamine diphosphate-dependent decarboxylation of 2-oxoglutarate and the subsequent addition of the resulting succinic semialdehyde-thiamine pyrophosphate anion to isochorismate to yield 2-succinyl-5-enolpyruvyl-6-hydroxy-3-cyclohexene-1-carboxylate (SEPHCHC). The chain is 2-succinyl-5-enolpyruvyl-6-hydroxy-3-cyclohexene-1-carboxylate synthase from Chlorobaculum tepidum (strain ATCC 49652 / DSM 12025 / NBRC 103806 / TLS) (Chlorobium tepidum).